The sequence spans 575 residues: E3 ubiquitin-protein ligase kcmf-1 (575 aa).

Residues 9–73 form a ZZ-type zinc finger; that stretch reads HEGVSCDGCA…PMQLILSSVD (65 aa). Positions 14, 17, 29, 32, 38, 41, 59, and 63 each coordinate Zn(2+). Disordered stretches follow at residues 277-306 and 530-575; these read PIYP…DDND and EADE…INID. 2 stretches are compositionally biased toward acidic residues: residues 297 to 306 and 530 to 563; these read SADESEDDND and EADE…ENDS.

Belongs to the KCMF1 family.

Its subcellular location is the cytoplasm. The protein resides in the late endosome. It localises to the lysosome. It carries out the reaction S-ubiquitinyl-[E2 ubiquitin-conjugating enzyme]-L-cysteine + [acceptor protein]-L-lysine = [E2 ubiquitin-conjugating enzyme]-L-cysteine + N(6)-ubiquitinyl-[acceptor protein]-L-lysine.. It participates in protein modification; protein ubiquitination. Its function is as follows. E3 ubiquitin-protein ligase which accepts ubiquitin from an E2 ubiquitin-conjugating enzyme and then transfers it to targeted substrates, promoting their degradation by the proteasome. In Caenorhabditis elegans, this protein is E3 ubiquitin-protein ligase kcmf-1.